The primary structure comprises 270 residues: Beta carbonic anhydrase 1 (270 aa).

Zn(2+)-binding residues include cysteine 39, aspartate 41, histidine 105, and cysteine 108.

This sequence belongs to the beta-class carbonic anhydrase family. As to quaternary structure, oligomer. Zn(2+) serves as cofactor.

The catalysed reaction is hydrogencarbonate + H(+) = CO2 + H2O. Functionally, reversible hydration of carbon dioxide. In Caenorhabditis elegans, this protein is Beta carbonic anhydrase 1 (bca-1).